Here is a 244-residue protein sequence, read N- to C-terminus: 2,5-diamino-6-ribosylamino-4(3H)-pyrimidinone 5'-phosphate reductase (244 aa).

NADP(+) contacts are provided by residues T74, D78, I160, and 183–187; that span reads GSHVI.

Belongs to the HTP reductase family. As to quaternary structure, homodimer.

It catalyses the reaction 2,5-diamino-6-(1-D-ribitylamino)pyrimidin-4(3H)-one 5'-phosphate + NADP(+) = 2,5-diamino-6-(1-D-ribosylamino)pyrimidin-4(3H)-one 5'-phosphate + NADPH + H(+). The catalysed reaction is 2,5-diamino-6-(1-D-ribitylamino)pyrimidin-4(3H)-one 5'-phosphate + NAD(+) = 2,5-diamino-6-(1-D-ribosylamino)pyrimidin-4(3H)-one 5'-phosphate + NADH + H(+). Its pathway is cofactor biosynthesis; riboflavin biosynthesis. Its function is as follows. Catalyzes an early step in riboflavin biosynthesis, the NADPH-dependent reduction of the ribose side chain of 2,5-diamino-6-ribosylamino-4(3H)-pyrimidinone 5'-phosphate, yielding 2,5-diamino-6-ribitylamino-4(3H)-pyrimidinone 5'-phosphate. The polypeptide is 2,5-diamino-6-ribosylamino-4(3H)-pyrimidinone 5'-phosphate reductase (RIB7) (Candida glabrata (strain ATCC 2001 / BCRC 20586 / JCM 3761 / NBRC 0622 / NRRL Y-65 / CBS 138) (Yeast)).